A 520-amino-acid polypeptide reads, in one-letter code: Ribonuclease Y (520 aa).

A helical transmembrane segment spans residues 3-23 (IEIAIVLILAAAGLGYFVGNM). Residues 210 to 273 (SVSVVALPSD…EVAKIALEKL (64 aa)) form the KH domain. The 94-residue stretch at 336-429 (VYQHSLEVAF…VQAADALSGA (94 aa)) folds into the HD domain.

The protein belongs to the RNase Y family.

It localises to the cell membrane. Its function is as follows. Endoribonuclease that initiates mRNA decay. The protein is Ribonuclease Y of Geobacter metallireducens (strain ATCC 53774 / DSM 7210 / GS-15).